The chain runs to 116 residues: U16-barytoxin-Tl1f (116 aa).

The signal sequence occupies residues 1 to 20 (MKTIIVFLSLLVLATKFGDA). A propeptide spanning residues 21-74 (NEGVNQEQMKEVIQNEFREDFLNEMAPMSLLQQLEAIESTLLEKEADRNSRQKR) is cleaved from the precursor. 3 disulfide bridges follow: cysteine 75–cysteine 90, cysteine 82–cysteine 95, and cysteine 89–cysteine 110. An N-linked (GlcNAc...) asparagine glycan is attached at asparagine 85.

The protein belongs to the neurotoxin 14 (magi-1) family. 06 (ICK-Trit) subfamily. As to expression, expressed by the venom gland.

Its subcellular location is the secreted. Functionally, ion channel inhibitor. This is U16-barytoxin-Tl1f from Trittame loki (Brush-footed trapdoor spider).